A 369-amino-acid polypeptide reads, in one-letter code: Glutamine synthetase (369 aa).

In terms of domain architecture, GS beta-grasp spans 23-102; sequence VIAEYIWVDS…VLAECWNNDG (80 aa). The GS catalytic domain occupies 109–369; that stretch reads HRHEAAKLFE…MSKEFERESS (261 aa).

Belongs to the glutamine synthetase family. Homooctamer.

It localises to the cytoplasm. The catalysed reaction is L-glutamate + NH4(+) + ATP = L-glutamine + ADP + phosphate + H(+). The chain is Glutamine synthetase (GLN1) from Eremothecium gossypii (strain ATCC 10895 / CBS 109.51 / FGSC 9923 / NRRL Y-1056) (Yeast).